Here is a 267-residue protein sequence, read N- to C-terminus: AMP/ADP-polyphosphate phosphotransferase (267 aa).

Belongs to the polyphosphate kinase 2 (PPK2) family. Class III subfamily. Mn(2+) serves as cofactor.

It catalyses the reaction [phosphate](n) + ADP = [phosphate](n+1) + AMP. It carries out the reaction [phosphate](n) + ATP = [phosphate](n+1) + ADP. Uses inorganic polyphosphate (polyP) as a donor to convert both AMP to ADP and ADP to ATP. Can also use GMP, CMP, UMP, GDP, CDP and UDP. The sequence is that of AMP/ADP-polyphosphate phosphotransferase from Meiothermus ruber (strain ATCC 35948 / DSM 1279 / VKM B-1258 / 21) (Thermus ruber).